The sequence spans 777 residues: MDSKESLTPGKEENPSSVLTQERGNVMDFCKILRGGATLKVSVSSTSLAAASQSDPKQQRLLVDFPKGSVSNVQQPDLSKAVSLSMGLYMGETETKVMGNDLGFPQQGQISLSSGETDLQLLEESIANLNRSTSVPENPKSSASSSVSAAPKEKEFPKTHSDVSSEQQNLKGQTGTNGGNVKLYTADQSTFDILQDLEFSSGSPGKERNQSPWRSDLLIDENCLLSPLAGEEDSFLLEGNSNEDCKPLILPDTKPKIKDNGDLVLSSSSNVTLPQVKTEKEDFIELCTPGVIKQEKLSTVYCQASFPGANIIGNKMSAISIHGVSTSGGQMYHYDMNTASLSQQQDQKPIFNVIPPIPVGSENWNRCQGSGDDNLTSLGTLNFPGRTVFSNGYSSPSMRPDVSSPPSSSSTATTGPPPKLCLVCSDEASGCHYGVLTCGSCKVFFKRAVEGQHNYLCAGRNDCIIDKIRRKNCPACRYRKCLQAGMNLEARKTKKKIKGIQQATTGVSQETSENPANKTIVPATLPQLTPTLVSLLEVIEPEVLYAGYDSTVPDSTWRIMTTLNMLGGRQVIAAVKWAKAIPGFRNLHLDDQMTLLQYSWMFLMAFALGWRSYRQASSNLLCFAPDLIINEQRMTLPCMYDQCKHMLYVSSELHRLQVSYEEYLCMKTLLLLSSVPKDGLKSQELFDEIRMTYIKELGKAIVKREGNSSQNWQRFYQLTKLLDSMHEVVENLLNYCFQTFLDKTMSIEFPEMLAEIITNQLPKYSNGNIKKLLFHQK.

Residues M1–N14 are compositionally biased toward basic and acidic residues. The segment at M1–Q21 is disordered. The modulating stretch occupies residues M1 to L420. T8 carries the phosphothreonine modification. Residue R23 is modified to Omega-N-methylarginine. Phosphoserine occurs at positions 45, 113, 134, and 141. Residues N130 to K182 are disordered. The span at S134–A150 shows a compositional bias: low complexity. Over residues P151–V163 the composition is skewed to basic and acidic residues. Positions S164–T174 are enriched in polar residues. S203, S211, and S226 each carry phosphoserine. A Glycyl lysine isopeptide (Lys-Gly) (interchain with G-Cter in SUMO2) cross-link involves residue K258. S267 carries the phosphoserine modification. Glycyl lysine isopeptide (Lys-Gly) (interchain with G-Cter in SUMO); alternate cross-links involve residues K277 and K293. Glycyl lysine isopeptide (Lys-Gly) (interchain with G-Cter in SUMO2); alternate cross-links involve residues K277 and K293. The span at S394–T414 shows a compositional bias: low complexity. Residues S394 to G415 form a disordered region. S404 is subject to Phosphoserine. A Glycyl lysine isopeptide (Lys-Gly) (interchain with G-Cter in ubiquitin) cross-link involves residue K419. 2 consecutive NR C4-type zinc fingers follow at residues C421–C441 and C457–C481. A DNA-binding region (nuclear receptor) is located at residues C421 to M486. K480, K492, K494, and K495 each carry N6-acetyllysine. The tract at residues G485–K777 is interaction with CLOCK. Positions N487–A523 are hinge. In terms of domain architecture, NR LBD spans T524–T758. Residues L532–L697 are interaction with CRY1. A Glycyl lysine isopeptide (Lys-Gly) (interchain with G-Cter in SUMO) cross-link involves residue K703.

The protein belongs to the nuclear hormone receptor family. NR3 subfamily. Heteromultimeric cytoplasmic complex with HSP90AA1, HSPA1A/HSPA1B, and FKBP5 or another immunophilin such as PPID, STIP1, or the immunophilin homolog PPP5C. Upon ligand binding FKBP5 dissociates from the complex and FKBP4 takes its place, thereby linking the complex to dynein and mediating transport to the nucleus, where the complex dissociates. Probably forms a complex composed of chaperones HSP90 and HSP70, co-chaperones CDC37, PPP5C, TSC1 and client protein TSC2, CDK4, AKT, RAF1 and NR3C1; this complex does not contain co-chaperones STIP1/HOP and PTGES3/p23. Directly interacts with UNC45A. Binds to DNA as a homodimer, and as heterodimer with NR3C2 or the retinoid X receptor. Binds STAT5A and STAT5B homodimers and heterodimers. Interacts with NRIP1, POU2F1, POU2F2 and TRIM28. Interacts with several coactivator complexes, including the SMARCA4 complex, CREBBP/EP300, TADA2L (Ada complex) and p160 coactivators such as NCOA2 and NCOA6. Interaction with BAG1 inhibits transactivation. Interacts with HEXIM1 and TGFB1I1. Interacts with NCOA1. Interacts with NCOA3, SMARCA4, SMARCC1, SMARCD1, and SMARCE1. Interacts with CLOCK, CRY1 and CRY2 in a ligand-dependent fashion. Interacts with CIART. Interacts with RWDD3. Interacts with UBE2I/UBC9 and this interaction is enhanced in the presence of RWDD3. Interacts with GRIP1. Interacts with NR4A3 (via nuclear receptor DNA-binding domain), represses transcription activity of NR4A3 on the POMC promoter Nur response element (NurRE). Directly interacts with PNRC2 to attract and form a complex with UPF1 and DCP1A; the interaction leads to rapid mRNA degradation. Interacts with GSK3B. Interacts with FNIP1 and FNIP2. Interacts (via C-terminus) with HNRNPU (via C-terminus). Interacts with MCM3AP. Interacts (via domain NR LBD) with HSP90AA1 and HSP90AB1. In the absence of hormonal ligand, interacts with TACC1. Interacts (via NR LBD domain) with ZNF764 (via KRAB domain); the interaction regulates transcription factor activity of NR3C1 by directing its actions toward certain biologic pathways. Post-translationally, acetylation by CLOCK reduces its binding to glucocorticoid response elements and its transcriptional activity. In terms of processing, increased proteasome-mediated degradation in response to glucocorticoids. Phosphorylated in the absence of hormone; becomes hyperphosphorylated in the presence of glucocorticoid. The Ser-203, Ser-226 and Ser-404-phosphorylated forms are mainly cytoplasmic, and the Ser-211-phosphorylated form is nuclear. Phosphorylation at Ser-211 increases transcriptional activity. Phosphorylation at Ser-203, Ser-226 and Ser-404 decreases signaling capacity. Phosphorylation at Ser-404 may protect from glucocorticoid-induced apoptosis. Phosphorylation at Ser-203 and Ser-211 is not required in regulation of chromosome segregation. May be dephosphorylated by PPP5C, attenuates NR3C1 action. Post-translationally, ubiquitinated by UBR5, leading to its degradation: UBR5 specifically recognizes and binds ligand-bound NR3C1 when it is not associated with coactivators (NCOAs). In presence of NCOAs, the UBR5-degron is not accessible, preventing its ubiquitination and degradation. In terms of processing, sumoylation at Lys-277 and Lys-293 negatively regulates its transcriptional activity. Sumoylation at Lys-703 positively regulates its transcriptional activity in the presence of RWDD3. Sumoylation at Lys-277 and Lys-293 is dispensable whereas sumoylation at Lys-703 is critical for the stimulatory effect of RWDD3 on its transcriptional activity. Heat shock increases sumoylation in a RWDD3-dependent manner. Within the infant and adult hippocampal formation, highest expression observed in the DG granule cell layer with moderate levels in the DG hilus, the CA2-CA4 pyramidal cell layer and the proximal part of the CA1 pyramidal cell layer. Moderate to high expression levels found in the presubiculum and in its' superficial layers. Weak but specific expression detected throughout the entire corticle mantle. In the amygdala, moderate levels were detected in the lateral, central and medial nuclei. Moderate expression levels were present in the PVNh alongside the third ventricle.

It is found in the cytoplasm. It localises to the nucleus. The protein resides in the mitochondrion. The protein localises to the cytoskeleton. Its subcellular location is the spindle. It is found in the microtubule organizing center. It localises to the centrosome. The protein resides in the chromosome. The protein localises to the nucleoplasm. In terms of biological role, receptor for glucocorticoids (GC). Has a dual mode of action: as a transcription factor that binds to glucocorticoid response elements (GRE), both for nuclear and mitochondrial DNA, and as a modulator of other transcription factors. Affects inflammatory responses, cellular proliferation and differentiation in target tissues. Involved in chromatin remodeling. Plays a role in rapid mRNA degradation by binding to the 5' UTR of target mRNAs and interacting with PNRC2 in a ligand-dependent manner which recruits the RNA helicase UPF1 and the mRNA-decapping enzyme DCP1A, leading to RNA decay. Could act as a coactivator for STAT5-dependent transcription upon growth hormone (GH) stimulation and could reveal an essential role of hepatic GR in the control of body growth. Mediates glucocorticoid-induced apoptosis. Promotes accurate chromosome segregation during mitosis. May act as a tumor suppressor. May play a negative role in adipogenesis through the regulation of lipolytic and antilipogenic gene expression. The chain is Glucocorticoid receptor (NR3C1) from Callithrix jacchus (White-tufted-ear marmoset).